A 360-amino-acid chain; its full sequence is Histidinol-phosphate aminotransferase (360 aa).

At Lys222 the chain carries N6-(pyridoxal phosphate)lysine.

This sequence belongs to the class-II pyridoxal-phosphate-dependent aminotransferase family. Histidinol-phosphate aminotransferase subfamily. Homodimer. Requires pyridoxal 5'-phosphate as cofactor.

It catalyses the reaction L-histidinol phosphate + 2-oxoglutarate = 3-(imidazol-4-yl)-2-oxopropyl phosphate + L-glutamate. It participates in amino-acid biosynthesis; L-histidine biosynthesis; L-histidine from 5-phospho-alpha-D-ribose 1-diphosphate: step 7/9. This is Histidinol-phosphate aminotransferase from Listeria monocytogenes serotype 4b (strain CLIP80459).